The primary structure comprises 160 residues: C-type lectin mosGCTL-1 (160 aa).

Residues Met1 to Gly20 form the signal peptide. The 118-residue stretch at Thr23 to Cys140 folds into the C-type lectin domain. 2 disulfide bridges follow: Cys44/Cys140 and Cys120/Cys140. N-linked (GlcNAc...) asparagine glycosylation is present at Asn76.

In terms of assembly, interacts with putative receptor-type tyrosine-protein phosphatase mosPTP-1; the interaction probably mediates the recruitment of West Nile virus particles in complex with C-type lectin mosGCTL-1 to the cell surface. (Microbial infection) Interacts with envelope protein E and virions of West Nile virus in a calcium-dependent manner. As to expression, female salivary gland (at protein level).

The protein localises to the secreted. Functionally, putative lectin. Its function is as follows. (Microbial infection) Facilitates West Nile virus infection in mosquitoes probably via capturing viral particles and presenting them to a ligand on the cell surface, thereby facilitating viral entry. This chain is C-type lectin mosGCTL-1, found in Aedes aegypti (Yellowfever mosquito).